The following is a 171-amino-acid chain: Shikimate kinase (171 aa).

14-19 (GAGKST) is a binding site for ATP. Ser18 lines the Mg(2+) pocket. Substrate contacts are provided by Asp36, Arg60, and Gly82. Arg120 serves as a coordination point for ATP. Arg139 is a substrate binding site. Gln156 provides a ligand contact to ATP.

This sequence belongs to the shikimate kinase family. Monomer. Mg(2+) is required as a cofactor.

It is found in the cytoplasm. It catalyses the reaction shikimate + ATP = 3-phosphoshikimate + ADP + H(+). It participates in metabolic intermediate biosynthesis; chorismate biosynthesis; chorismate from D-erythrose 4-phosphate and phosphoenolpyruvate: step 5/7. Catalyzes the specific phosphorylation of the 3-hydroxyl group of shikimic acid using ATP as a cosubstrate. This Pseudoalteromonas atlantica (strain T6c / ATCC BAA-1087) protein is Shikimate kinase.